Reading from the N-terminus, the 503-residue chain is Beta-mannosyltransferase 4 (503 aa).

At 1–24 the chain is on the cytoplasmic side; it reads MKLDTQQISHLLSRQMYHLAPRKK. Residues 25-45 traverse the membrane as a helical segment; it reads LLIWGGSLGFVLLLLIVASSH. The Extracellular segment spans residues 46–503; that stretch reads QRIRSTILHR…QYCQRYGELH (458 aa). N-linked (GlcNAc...) asparagine glycosylation is present at Asn468.

It belongs to the BMT family.

It is found in the membrane. In terms of biological role, beta-mannosyltransferase involved in cell wall biosynthesis. Responsible for addition of a hexose to the beta-mannose chain. The chain is Beta-mannosyltransferase 4 (BMT4) from Komagataella phaffii (strain ATCC 76273 / CBS 7435 / CECT 11047 / NRRL Y-11430 / Wegner 21-1) (Yeast).